A 786-amino-acid polypeptide reads, in one-letter code: MTSSYMRLKAAAIAFGVIVATAAVPSPASGREHDGGYAALIRRASYGVPHITADDFGSLGFGVGYVQAEDNICVIAESVVTANGERSRWFGATGPDDADVRTTSSTQAIDDRVAERLLEGPRDGVRAPCDDVRDQMRGFVAGYNHFLRRTGVHRLTDPACRGKAWVRPLSEIDLWRTSWDSMVRAGSGALLDGIVAATPPTAAGPASAPEAPDAAAIAAALDGTSAGIGSNAYGLGAQATVNGSGMVLANPHFPWQGAERFYRMHLKVPGRYDVEGAALIGDPIIEIGHNRTVAWSHTVSTARRFVWHRLSLVPGDPTSYYVDGRPERMRARTVTVQTGSGPVSRTFHDTRYGPVAVVPGTFDWTPATAYAITDVNAGNNRAFDGWLRMGQAKDVRALKAVLDRHQFLPWVNVIAADARGEALYGDHSVVPRVTGALAAACIPAPFQPLYASSGQAVLDGSRSDCALGADPDAAVPGILGPASLPVRFRDDYVTNSNDSHWLASPAAPLEGFPRILGNERTPRSLRTRLGLDQIQQRLAGTDGLPGKGFTTARLWQVMFGNRMHGAELVRDDLVALCRRQPTATASNGAIVDLTAACTALSRFDERADLDSRGAHLFTEFLAGGIRFADTFEVTDPVRTPAPFWNTTDPRVRTALADACNGSPASPSTRSVGDIHTDSRGERRIPIHGGRGEAGTFNVITNPLVPGVGYPQVVHGTSFVMAVELGPHGPSGRQILTYAQSTNPNSPWYADQTVLYSRKGWDTIKYTEAQIAADPNLRVYRVAQRGR.

The signal sequence occupies residues 1–22 (MTSSYMRLKAAAIAFGVIVATA). The propeptide occupies 23 to 34 (AVPSPASGREHD). A substrate-binding region spans residues 35-130 (GGYAALIRRA…PRDGVRAPCD (96 aa)). Positions 215-229 (AAIAAALDGTSAGIG) are cleaved as a propeptide — spacer peptide. Positions 220–239 (ALDGTSAGIGSNAYGLGAQA) are possible recognition-sequence of an AAC processing enzyme. S230 serves as the catalytic Nucleophile. The disordered stretch occupies residues 658-689 (ACNGSPASPSTRSVGDIHTDSRGERRIPIHGG). A compositionally biased stretch (basic and acidic residues) spans 672–684 (GDIHTDSRGERRI).

This sequence belongs to the peptidase S45 family. In terms of assembly, heterodimer of a small subunit and a large subunit processed from the same precursor.

It localises to the secreted. In terms of biological role, catalyzes the hydrolysis of the palmitoyl moiety of the antifungal antibiotic, aculeacin-A, giving a hexapeptide moiety and a long chain fatty acid. In Actinoplanes utahensis, this protein is Aculeacin-A acylase (aac).